A 425-amino-acid polypeptide reads, in one-letter code: Serine hydroxymethyltransferase (425 aa).

Residues Leu-128 and 132–134 (GHL) each bind (6S)-5,6,7,8-tetrahydrofolate. At Lys-237 the chain carries N6-(pyridoxal phosphate)lysine.

It belongs to the SHMT family. Homodimer. The cofactor is pyridoxal 5'-phosphate.

Its subcellular location is the cytoplasm. It carries out the reaction (6R)-5,10-methylene-5,6,7,8-tetrahydrofolate + glycine + H2O = (6S)-5,6,7,8-tetrahydrofolate + L-serine. The protein operates within one-carbon metabolism; tetrahydrofolate interconversion. It participates in amino-acid biosynthesis; glycine biosynthesis; glycine from L-serine: step 1/1. In terms of biological role, catalyzes the reversible interconversion of serine and glycine with tetrahydrofolate (THF) serving as the one-carbon carrier. This reaction serves as the major source of one-carbon groups required for the biosynthesis of purines, thymidylate, methionine, and other important biomolecules. Also exhibits THF-independent aldolase activity toward beta-hydroxyamino acids, producing glycine and aldehydes, via a retro-aldol mechanism. The polypeptide is Serine hydroxymethyltransferase (Wolbachia pipientis wMel).